The primary structure comprises 125 residues: Small ribosomal subunit protein uS13 (125 aa).

Positions 92–125 (RRHLPVHGQRTKTNARTRKGPKKTVAGKKKAGKK) are disordered.

This sequence belongs to the universal ribosomal protein uS13 family. Part of the 30S ribosomal subunit. Forms a loose heterodimer with protein S19. Forms two bridges to the 50S subunit in the 70S ribosome.

Functionally, located at the top of the head of the 30S subunit, it contacts several helices of the 16S rRNA. In the 70S ribosome it contacts the 23S rRNA (bridge B1a) and protein L5 of the 50S subunit (bridge B1b), connecting the 2 subunits; these bridges are implicated in subunit movement. Contacts the tRNAs in the A and P-sites. In Saccharopolyspora erythraea (strain ATCC 11635 / DSM 40517 / JCM 4748 / NBRC 13426 / NCIMB 8594 / NRRL 2338), this protein is Small ribosomal subunit protein uS13.